The chain runs to 285 residues: 4-diphosphocytidyl-2-C-methyl-D-erythritol kinase (285 aa).

Lys28 is a catalytic residue. 109-119 (PVAAGLGGGSA) lines the ATP pocket. Asp148 is a catalytic residue.

This sequence belongs to the GHMP kinase family. IspE subfamily.

The catalysed reaction is 4-CDP-2-C-methyl-D-erythritol + ATP = 4-CDP-2-C-methyl-D-erythritol 2-phosphate + ADP + H(+). It participates in isoprenoid biosynthesis; isopentenyl diphosphate biosynthesis via DXP pathway; isopentenyl diphosphate from 1-deoxy-D-xylulose 5-phosphate: step 3/6. Catalyzes the phosphorylation of the position 2 hydroxy group of 4-diphosphocytidyl-2C-methyl-D-erythritol. This Novosphingobium aromaticivorans (strain ATCC 700278 / DSM 12444 / CCUG 56034 / CIP 105152 / NBRC 16084 / F199) protein is 4-diphosphocytidyl-2-C-methyl-D-erythritol kinase.